A 103-amino-acid chain; its full sequence is Phosphoribosyl-ATP pyrophosphatase (103 aa).

The protein belongs to the PRA-PH family.

The protein resides in the cytoplasm. It catalyses the reaction 1-(5-phospho-beta-D-ribosyl)-ATP + H2O = 1-(5-phospho-beta-D-ribosyl)-5'-AMP + diphosphate + H(+). It participates in amino-acid biosynthesis; L-histidine biosynthesis; L-histidine from 5-phospho-alpha-D-ribose 1-diphosphate: step 2/9. In Listeria monocytogenes serotype 4a (strain HCC23), this protein is Phosphoribosyl-ATP pyrophosphatase.